The following is a 315-amino-acid chain: Methionyl-tRNA formyltransferase (315 aa).

A (6S)-5,6,7,8-tetrahydrofolate-binding site is contributed by 113–116 (SLLP).

Belongs to the Fmt family.

The catalysed reaction is L-methionyl-tRNA(fMet) + (6R)-10-formyltetrahydrofolate = N-formyl-L-methionyl-tRNA(fMet) + (6S)-5,6,7,8-tetrahydrofolate + H(+). Functionally, attaches a formyl group to the free amino group of methionyl-tRNA(fMet). The formyl group appears to play a dual role in the initiator identity of N-formylmethionyl-tRNA by promoting its recognition by IF2 and preventing the misappropriation of this tRNA by the elongation apparatus. In Yersinia enterocolitica serotype O:8 / biotype 1B (strain NCTC 13174 / 8081), this protein is Methionyl-tRNA formyltransferase.